Consider the following 704-residue polypeptide: Histone-lysine N-methyltransferase, H3 lysine-9 specific SUVH1 (704 aa).

Disordered regions lie at residues 1-21 (MEQGLRSDGNNPPSIDKTRVL) and 68-176 (PFVA…QAEG). Polar residues-rich tracts occupy residues 80-90 (ESSQQTPSGVP) and 109-121 (SFRTPTTANGNSG). The segment covering 159–170 (GKKRGRPKKPRR) has biased composition (basic residues). The YDG domain maps to 265-412 (GNAPGIEVGD…CNVFKYKLLR (148 aa)). The Pre-SET domain maps to 487–548 (PSCHCVGGCQ…NCRNRMSQGG (62 aa)). 9 residues coordinate Zn(2+): cysteine 489, cysteine 491, cysteine 495, cysteine 502, cysteine 504, cysteine 530, cysteine 534, cysteine 536, and cysteine 540. Residues 551–681 (ARLEVFKTKN…PMQELTFDYG (131 aa)) form the SET domain. Residues 561-563 (RGW), aspartate 593, tyrosine 595, arginine 635, and 638-639 (NH) contribute to the S-adenosyl-L-methionine site. The Zn(2+) site is built by cysteine 641, cysteine 692, cysteine 694, and cysteine 699. The region spanning 688 to 704 (RRKKCLCGSLNCRGYFY) is the Post-SET domain.

The protein belongs to the class V-like SAM-binding methyltransferase superfamily. Histone-lysine methyltransferase family. Suvar3-9 subfamily. In terms of assembly, interacts with LHP1. Expressed in roots, stems, leaves and flowers.

It is found in the nucleus. The protein resides in the chromosome. The catalysed reaction is N(6)-methyl-L-lysyl(27)-[histone H3] + S-adenosyl-L-methionine = N(6),N(6)-dimethyl-L-lysyl(27)-[histone H3] + S-adenosyl-L-homocysteine + H(+). The enzyme catalyses L-lysyl(9)-[histone H3] + 2 S-adenosyl-L-methionine = N(6),N(6)-dimethyl-L-lysyl(9)-[histone H3] + 2 S-adenosyl-L-homocysteine + 2 H(+). It catalyses the reaction L-lysyl(27)-[histone H3] + S-adenosyl-L-methionine = N(6)-methyl-L-lysyl(27)-[histone H3] + S-adenosyl-L-homocysteine + H(+). Its function is as follows. Histone methyltransferase. Methylates in vitro both 'Lys-9' and 'Lys-27' of histone H3. Required for in vivo dimethylation of 'Lys-9'. H3 'Lys-9' methylation represents a specific tag for epigenetic control for plant development and transcriptional repression. The sequence is that of Histone-lysine N-methyltransferase, H3 lysine-9 specific SUVH1 (SUVH1) from Nicotiana tabacum (Common tobacco).